Here is a 562-residue protein sequence, read N- to C-terminus: 3-hydroxy-3-methylglutaryl-coenzyme A reductase 2 (562 aa).

2 helical membrane passes run 32–56 (ALPL…YFLL) and 77–100 (ICAL…DLIF). A linker region spans residues 101–146 (RSSSDDDVWVNDGMIPCNQSLDCREVLPIKPNSVDPPRESELDSVE). N-linked (GlcNAc...) asparagine glycosylation is present at Asn118. The catalytic stretch occupies residues 147-562 (DEEIVKLVID…DIGPSSQVNR (416 aa)). The Charge relay system role is filled by Glu240. N-linked (GlcNAc...) asparagine glycosylation occurs at Asn304. Catalysis depends on charge relay system residues Lys372 and Asp448. Catalysis depends on His544, which acts as the Proton donor. The N-linked (GlcNAc...) asparagine glycan is linked to Asn548. A Phosphoserine modification is found at Ser550.

It belongs to the HMG-CoA reductase family. In terms of tissue distribution, restricted to young seedlings, roots, and inflorescences. Expressed in root tips, shoot apex, secretory zone of the stigma, microspores, mature pollen grains, gynoecium vascular tissue and fertilized ovules.

It localises to the endoplasmic reticulum membrane. It carries out the reaction (R)-mevalonate + 2 NADP(+) + CoA = (3S)-3-hydroxy-3-methylglutaryl-CoA + 2 NADPH + 2 H(+). It functions in the pathway metabolic intermediate biosynthesis; (R)-mevalonate biosynthesis; (R)-mevalonate from acetyl-CoA: step 3/3. With respect to regulation, regulated at the post-translational level in response to alterations of the sphingolipid and the sterol biosynthetic pathways. Catalyzes the synthesis of mevalonate. The specific precursor of all isoprenoid compounds present in plants. This Arabidopsis thaliana (Mouse-ear cress) protein is 3-hydroxy-3-methylglutaryl-coenzyme A reductase 2 (HMG2).